Consider the following 215-residue polypeptide: 3-demethoxyubiquinol 3-hydroxylase (215 aa).

Residues Glu-64, Glu-94, His-97, Glu-146, Glu-178, and His-181 each contribute to the Fe cation site.

This sequence belongs to the COQ7 family. The cofactor is Fe cation.

It is found in the cell membrane. The catalysed reaction is a 5-methoxy-2-methyl-3-(all-trans-polyprenyl)benzene-1,4-diol + AH2 + O2 = a 3-demethylubiquinol + A + H2O. It functions in the pathway cofactor biosynthesis; ubiquinone biosynthesis. Its function is as follows. Catalyzes the hydroxylation of 2-nonaprenyl-3-methyl-6-methoxy-1,4-benzoquinol during ubiquinone biosynthesis. The chain is 3-demethoxyubiquinol 3-hydroxylase from Bordetella avium (strain 197N).